Consider the following 575-residue polypeptide: UvrABC system protein C (575 aa).

The region spanning 16–94 (SQPGVYRMYD…IKLYQPRYNV (79 aa)) is the GIY-YIG domain. A UVR domain is found at 204-239 (DQVLTQLISRMETASQNLEFEEAARIRDQIQAVRRV).

The protein belongs to the UvrC family. As to quaternary structure, interacts with UvrB in an incision complex.

Its subcellular location is the cytoplasm. In terms of biological role, the UvrABC repair system catalyzes the recognition and processing of DNA lesions. UvrC both incises the 5' and 3' sides of the lesion. The N-terminal half is responsible for the 3' incision and the C-terminal half is responsible for the 5' incision. In Shigella dysenteriae serotype 1 (strain Sd197), this protein is UvrABC system protein C.